Consider the following 190-residue polypeptide: Crossover junction endodeoxyribonuclease RuvC (190 aa).

Catalysis depends on residues D7, E68, and D141. Positions 7, 68, and 141 each coordinate Mg(2+).

Belongs to the RuvC family. As to quaternary structure, homodimer which binds Holliday junction (HJ) DNA. The HJ becomes 2-fold symmetrical on binding to RuvC with unstacked arms; it has a different conformation from HJ DNA in complex with RuvA. In the full resolvosome a probable DNA-RuvA(4)-RuvB(12)-RuvC(2) complex forms which resolves the HJ. Mg(2+) is required as a cofactor.

The protein resides in the cytoplasm. It carries out the reaction Endonucleolytic cleavage at a junction such as a reciprocal single-stranded crossover between two homologous DNA duplexes (Holliday junction).. The RuvA-RuvB-RuvC complex processes Holliday junction (HJ) DNA during genetic recombination and DNA repair. Endonuclease that resolves HJ intermediates. Cleaves cruciform DNA by making single-stranded nicks across the HJ at symmetrical positions within the homologous arms, yielding a 5'-phosphate and a 3'-hydroxyl group; requires a central core of homology in the junction. The consensus cleavage sequence is 5'-(A/T)TT(C/G)-3'. Cleavage occurs on the 3'-side of the TT dinucleotide at the point of strand exchange. HJ branch migration catalyzed by RuvA-RuvB allows RuvC to scan DNA until it finds its consensus sequence, where it cleaves and resolves the cruciform DNA. In Endomicrobium trichonymphae, this protein is Crossover junction endodeoxyribonuclease RuvC.